The sequence spans 654 residues: Glutamyl-tRNA(Gln) amidotransferase subunit B, mitochondrial (654 aa).

The transit peptide at 1–8 (MGRIPTRE) directs the protein to the mitochondrion. The disordered stretch occupies residues 79-101 (DQAKASKAQAKGKKKRSSADNQT).

It belongs to the GatB/GatE family. GatB subfamily. In terms of assembly, subunit of the heterotrimeric GatCAB amidotransferase (AdT) complex, composed of A, B and C subunits.

It is found in the mitochondrion. The enzyme catalyses L-glutamyl-tRNA(Gln) + L-glutamine + ATP + H2O = L-glutaminyl-tRNA(Gln) + L-glutamate + ADP + phosphate + H(+). In terms of biological role, allows the formation of correctly charged Gln-tRNA(Gln) through the transamidation of misacylated Glu-tRNA(Gln) in the mitochondria. The reaction takes place in the presence of glutamine and ATP through an activated gamma-phospho-Glu-tRNA(Gln). The protein is Glutamyl-tRNA(Gln) amidotransferase subunit B, mitochondrial of Pyricularia oryzae (strain 70-15 / ATCC MYA-4617 / FGSC 8958) (Rice blast fungus).